Consider the following 82-residue polypeptide: Large ribosomal subunit protein bL31 (82 aa).

Belongs to the bacterial ribosomal protein bL31 family. Type A subfamily. In terms of assembly, part of the 50S ribosomal subunit.

Its function is as follows. Binds the 23S rRNA. The chain is Large ribosomal subunit protein bL31 from Rippkaea orientalis (strain PCC 8801 / RF-1) (Cyanothece sp. (strain PCC 8801)).